Consider the following 359-residue polypeptide: MTLNSSTEDGIKRIQDDCPKAGRHNYIFVMIPTLYSIIFVVGIFGNSLVVIVIYFYMKLKTVASVFLLNLALADLCFLLTLPLWAVYTAMEYRWPFGNHLCKIASASVSFNLYASVFLLTCLSIDRYLAIVHPMKSRLRRTMLVAKVTCIIIWLMAGLASLPAVIYRNVYFIENTNITVCAFHYESQNSTLPIGLGLTKNILGFVFPFLIILTSYTLIWKALKKAYKIQKNTPRNDDIFRIIMAIVLFFFFSWVPHQIFTFLDVLIQLGIIRDCEIADIVDTAMPITICIAYFNNCLNPLFYGFLGKKFKKYFLQLLKYIPPTAKSHAGLSTKMSTLSYRPSDNMSSSAKKSASFFEVE.

At 1 to 25 the chain is on the extracellular side; sequence MTLNSSTEDGIKRIQDDCPKAGRHN. The N-linked (GlcNAc...) asparagine glycan is linked to asparagine 4. Glutamine 15 and aspartate 17 together coordinate angiotensin II. 2 disulfide bridges follow: cysteine 18–cysteine 274 and cysteine 101–cysteine 180. Residues 26–55 traverse the membrane as a helical segment; that stretch reads YIFVMIPTLYSIIFVVGIFGNSLVVIVIYF. Over 56–61 the chain is Cytoplasmic; it reads YMKLKT. Residues 62–89 form a helical membrane-spanning segment; the sequence is VASVFLLNLALADLCFLLTLPLWAVYTA. The Extracellular segment spans residues 90-98; the sequence is MEYRWPFGN. Residues 99-125 traverse the membrane as a helical segment; it reads HLCKIASASVSFNLYASVFLLTCLSID. Over 126–141 the chain is Cytoplasmic; that stretch reads RYLAIVHPMKSRLRRT. A helical membrane pass occupies residues 142–165; it reads MLVAKVTCIIIWLMAGLASLPAVI. Topologically, residues 166–190 are extracellular; it reads YRNVYFIENTNITVCAFHYESQNST. Arginine 167 is an angiotensin II binding site. Asparagine 176 carries an N-linked (GlcNAc...) asparagine glycan. Angiotensin II is bound by residues phenylalanine 182, histidine 183, and tyrosine 184. N-linked (GlcNAc...) asparagine glycosylation is present at asparagine 188. Residues 191–216 form a helical membrane-spanning segment; it reads LPIGLGLTKNILGFVFPFLIILTSYT. Lysine 199 contributes to the angiotensin II binding site. Residues 217-239 lie on the Cytoplasmic side of the membrane; sequence LIWKALKKAYKIQKNTPRNDDIF. Residues 240–268 traverse the membrane as a helical segment; it reads RIIMAIVLFFFFSWVPHQIFTFLDVLIQL. At 269–278 the chain is on the extracellular side; it reads GIIRDCEIAD. A helical membrane pass occupies residues 279–304; the sequence is IVDTAMPITICIAYFNNCLNPLFYGF. The Cytoplasmic portion of the chain corresponds to 305 to 359; it reads LGKKFKKYFLQLLKYIPPTAKSHAGLSTKMSTLSYRPSDNMSSSAKKSASFFEVE. The segment at 339 to 359 is disordered; the sequence is YRPSDNMSSSAKKSASFFEVE. Over residues 346–359 the composition is skewed to low complexity; the sequence is SSSAKKSASFFEVE.

This sequence belongs to the G-protein coupled receptor 1 family. As to quaternary structure, interacts with MAS1. Interacts with ARRB1. Interacts with FLNA (via filamin repeat 21); increases PKA-mediated phosphorylation of FLNA. C-terminal Ser or Thr residues may be phosphorylated. Is expressed in the liver, kidney, aorta, lung, uterus, ovary, spleen, heart, and vascular smooth muscle cell. Expressed most abundantly in the adrenal gland.

It localises to the cell membrane. Functionally, receptor for angiotensin II, a vasoconstricting peptide, which acts as a key regulator of blood pressure and sodium retention by the kidney. The activated receptor in turn couples to G-alpha proteins G(q) (GNAQ, GNA11, GNA14 or GNA15) and thus activates phospholipase C and increases the cytosolic Ca(2+) concentrations, which in turn triggers cellular responses such as stimulation of protein kinase C. The chain is Type-1 angiotensin II receptor B (Agtr1b) from Rattus norvegicus (Rat).